A 597-amino-acid polypeptide reads, in one-letter code: (E)-sabinene hydrate synthase, chloroplastic (597 aa).

Residues 1 to 47 constitute a chloroplast transit peptide; sequence MSTISINHVGILRNPLQCKNKRTSINKPWSLSLPRSSPASRLVKPCR. Mn(2+) is bound by residues Asp353 and Asp357. The DDXXD motif signature appears at 353–357; sequence DDVYD. Homodimerization regions lie at residues 359-365 and 431-468; these read YGTLDEL and EAGWYENGYTPSLEEYLTNATISIGVPPIVLPVEVSLP. Mn(2+) contacts are provided by Asp495 and Glu503.

It belongs to the terpene synthase family. In terms of assembly, homodimer. Mn(2+) is required as a cofactor. Requires Mg(2+) as cofactor.

It localises to the plastid. The protein localises to the chloroplast. It carries out the reaction (2E)-geranyl diphosphate + H2O = sabinene hydrate + diphosphate. Its pathway is secondary metabolite biosynthesis; terpenoid biosynthesis. Its function is as follows. Involved in the biosynthesis of phenolic monoterpenes natural products. Monoterpene synthase which catalyzes the conversion of geranyl diphosphate (GPP) to sabinene hydrate, specifically (E)-sabinene hydrate, and the formation of minor amounts and traces of several other monoterpenes (e.g. mainly alpha-pinene, limonene and alpha-terpineol). This chain is (E)-sabinene hydrate synthase, chloroplastic, found in Thymus vulgaris (Thyme).